A 447-amino-acid polypeptide reads, in one-letter code: NAD-dependent histone deacetylase HST3 (447 aa).

The tract at residues 1-21 (MTSVSPSPPASRSGSMCSDLP) is disordered. In terms of domain architecture, Deacetylase sirtuin-type spans 35 to 363 (LDADDEVLRR…IKKLRQLKRE (329 aa)). Residues 60 to 79 (GAGISCNAGIPDFRSSDGLY) and 151 to 154 (QNID) contribute to the NAD(+) site. The active-site Proton acceptor is the H187. Zn(2+) contacts are provided by C195, C198, C220, and C223. Residues 282-284 (GTS), 312-314 (NKT), and C333 contribute to the NAD(+) site. Positions 365–375 (SDLRKQMKAQK) are enriched in basic and acidic residues. Disordered regions lie at residues 365–393 (SDLRKQMKAQKDSIGTPPTTPLRTAQGID) and 411–447 (KRKILSPENSSEEDEEENLDTRKRAKIRPTFGDNQAS).

It belongs to the sirtuin family. Class I subfamily. The cofactor is Zn(2+).

It is found in the cytoplasm. The protein localises to the nucleus. The enzyme catalyses N(6)-acetyl-L-lysyl-[protein] + NAD(+) + H2O = 2''-O-acetyl-ADP-D-ribose + nicotinamide + L-lysyl-[protein]. Functionally, NAD-dependent histone deacetylase, which contributes together with HST4 to histone H3 'Lys-56' deacetylation, regulation of telomeric silencing, proper cell cycle progression, DNA damage control, DNA recombination, and genomic maintenance. This Saccharomyces cerevisiae (strain ATCC 204508 / S288c) (Baker's yeast) protein is NAD-dependent histone deacetylase HST3 (HST3).